The primary structure comprises 1075 residues: DNA-directed RNA polymerase subunit beta (1075 aa).

This sequence belongs to the RNA polymerase beta chain family. In terms of assembly, in plastids the minimal PEP RNA polymerase catalytic core is composed of four subunits: alpha, beta, beta', and beta''. When a (nuclear-encoded) sigma factor is associated with the core the holoenzyme is formed, which can initiate transcription.

Its subcellular location is the plastid. The protein resides in the chloroplast. The enzyme catalyses RNA(n) + a ribonucleoside 5'-triphosphate = RNA(n+1) + diphosphate. Its function is as follows. DNA-dependent RNA polymerase catalyzes the transcription of DNA into RNA using the four ribonucleoside triphosphates as substrates. This chain is DNA-directed RNA polymerase subunit beta, found in Saccharum officinarum (Sugarcane).